The following is a 328-amino-acid chain: Neuropeptides B/W receptor type 1 (328 aa).

Topologically, residues 1–37 (MDNASFSEPWPANASGPDPALSCSNASTLAPLPAPLA) are extracellular. Residues Asn3, Asn13, and Asn25 are each glycosylated (N-linked (GlcNAc...) asparagine). A helical membrane pass occupies residues 38-61 (VAVPVVYAVICAVGLAGNSAVLYV). Topologically, residues 62-72 (LLRAPRMKTVT) are cytoplasmic. A helical membrane pass occupies residues 73-97 (NLFILNLAIADELFTLVLPINIADF). Residues 98 to 112 (LLRQWPFGELMCKLI) lie on the Extracellular side of the membrane. A disulfide bridge links Cys109 with Cys188. A helical transmembrane segment spans residues 113–132 (VAIDQYNTFSSLYFLTVMSA). Topologically, residues 133–157 (DRYLVVLATAESRRVAGRTYSAARA) are cytoplasmic. A helical transmembrane segment spans residues 158 to 177 (VSLAVWGIVTLVVLPFAVFA). Topologically, residues 178-202 (RLDDEQGRRQCVLVFPQPEAFWWRA) are extracellular. The chain crosses the membrane as a helical span at residues 203–224 (SRLYTLVLGFAIPVSTICVLYT). The Cytoplasmic segment spans residues 225-248 (TLLCRLHAMRLDSHAKALERAKKR). Residues 249 to 273 (VTFLVVAILAVCLLCWTPYHLSTVV) form a helical membrane-spanning segment. Residues 274–283 (ALTTDLPQTP) lie on the Extracellular side of the membrane. Residues 284–298 (LVIAISYFITSLSYA) form a helical membrane-spanning segment. Over 299–328 (NSCLNPFLYAFLDASFRRNLRQLITCRAAA) the chain is Cytoplasmic.

It belongs to the G-protein coupled receptor 1 family. In terms of tissue distribution, found in cerebellum and frontal cortex. Detected at high levels in hippocampus, amygdala and trachea; at moderate levels in fetal brain, pituitary gland and prostate. Not in caudate, accumbens, kidney or liver. Also detected at high levels in lung carcinoma.

It localises to the cell membrane. In terms of biological role, interacts specifically with a number of opioid ligands. Receptor for neuropeptides B and W, which may be involved in neuroendocrine system regulation, food intake and the organization of other signals. Has a higher affinity for neuropeptide B. This is Neuropeptides B/W receptor type 1 (NPBWR1) from Homo sapiens (Human).